The following is a 631-amino-acid chain: Hepatocyte nuclear factor 1-alpha (631 aa).

Residues 1 to 31 (MVSKLSQLQTELLAALLESGLSKEALIQALG) are dimerization. Residues 1–32 (MVSKLSQLQTELLAALLESGLSKEALIQALGE) form the HNF-p1 domain. The segment at 40–81 (GEGPLDKGESCGGGRGELAELPNGLGETRGSEDETDDDGEDF) is disordered. Serine 70 is subject to Phosphoserine. Threonine 74 is subject to Phosphothreonine. The 96-residue stretch at 87 to 182 (KELENLSPEE…VAQQFTHAGQ (96 aa)) folds into the POU-specific atypical domain. Serine 93 is modified (phosphoserine). Lysine 117 participates in a covalent cross-link: Glycyl lysine isopeptide (Lys-Gly) (interchain with G-Cter in ubiquitin). 4 interaction with DNA regions span residues 130–132 (QRE), 143–149 (HLSQHLN), 155–158 (KTQK), and 203–206 (RFKW). The tract at residues 183 to 205 (GGLIEEPTGDELPTKKGRRNRFK) is disordered. Residues 197–205 (KKGRRNRFK) carry the Nuclear localization signal motif. Residues 199–279 (GRRNRFKWGP…NRRKEEAFRH (81 aa)) constitute a DNA-binding region (homeobox; HNF1-type). A Phosphoserine modification is found at serine 247. Interaction with DNA stretches follow at residues 263 to 265 (RVY) and 270 to 273 (NRRK). Disordered regions lie at residues 283–358 (MDTY…GLEP) and 545–567 (SDTE…TLHV). Pro residues predominate over residues 288-298 (GPPPGPGPGPA). Serine 313 carries the phosphoserine modification. The span at 325-353 (PATSETAEVPSSSGGPLVTVSTPLHQVSP) shows a compositional bias: polar residues.

This sequence belongs to the HNF1 homeobox family. Binds DNA as a dimer. Heterotetramer with PCBD1; formed by a dimer of dimers. Interacts with PCBD1. Interacts with BHLHE41. Interacts with NR5A2. Interacts with SPOP; this interaction promotes ubiquitination and degradation of HNF1A. Ubiquitinated in s SPOP-dependent manner; leading to prteasomal degradation. Liver.

It localises to the nucleus. In terms of biological role, transcriptional activator that regulates the tissue specific expression of multiple genes, especially in pancreatic islet cells and in liver. Binds to the inverted palindrome 5'-GTTAATNATTAAC-3'. Activates the transcription of CYP1A2, CYP2E1 and CYP3A11. (Microbial infection) Plays a crucial role for hepatitis B virus gene transcription and DNA replication. Mechanistically, synergistically cooperates with NR5A2 to up-regulate the activity of one of the critical cis-elements in the hepatitis B virus genome enhancer II (ENII). The chain is Hepatocyte nuclear factor 1-alpha (HNF1A) from Homo sapiens (Human).